Here is a 331-residue protein sequence, read N- to C-terminus: Leucine-rich repeat-containing protein 26 (331 aa).

The N-terminal stretch at 1-26 (MRGSFFSRLPPQLSLLLLLSLRRVWT) is a signal peptide. The Extracellular segment spans residues 27–261 (QEDIGTAPSK…QCTQSLAARD (235 aa)). The LRRNT domain maps to 34–71 (PSKSPVAPECPEACSCSLGGKANCSALALPAVPADLSW). Cystine bridges form between cysteine 43/cysteine 49 and cysteine 47/cysteine 57. LRR repeat units follow at residues 72–93 (QVRSLLLDHNRVSALPPGAFAN), 96–117 (ALLYLDLRENRLRSVHARAFWG), 120–141 (VLQWLDLSSNQLETLPPGTFAP), 144–165 (ALSFLSLAGNRLALLEPSILGP), and 168–191 (LLRVLSLQDNSLSAIEAGLLNNLP). One can recognise an LRRCT domain in the interval 201–255 (NPWTCNCALRPLCTWLRKHPRPASETETLLCVSPRLQTLSLLTAFPDAAFKQCTQ). Cystine bridges form between cysteine 205–cysteine 231 and cysteine 207–cysteine 253. Residues 262-282 (LAVVYALGPVSFLASLAICLA) form a helical membrane-spanning segment. Over 283-331 (LGSVLTACGARRRRRRRTTVRHLLRRQLDPEGPPSLEDAGSPVTAAIQA) the chain is Cytoplasmic. Positions 310–331 (LDPEGPPSLEDAGSPVTAAIQA) are disordered.

Interacts with KCNMA1.

It localises to the cell membrane. It is found in the cytoplasm. The protein resides in the cytoskeleton. Functionally, auxiliary protein of the large-conductance, voltage and calcium-activated potassium channel (BK alpha). Required for the conversion of BK alpha channels from a high-voltage to a low-voltage activated channel type in non-excitable cells. These are characterized by negative membrane voltages and constant low levels of calcium. This chain is Leucine-rich repeat-containing protein 26 (Lrrc26), found in Mus musculus (Mouse).